The primary structure comprises 499 residues: L-arabinose isomerase (499 aa).

Residues Glu-306, Glu-333, His-350, and His-449 each coordinate Mn(2+).

This sequence belongs to the arabinose isomerase family. Mn(2+) serves as cofactor.

It carries out the reaction beta-L-arabinopyranose = L-ribulose. The protein operates within carbohydrate degradation; L-arabinose degradation via L-ribulose; D-xylulose 5-phosphate from L-arabinose (bacterial route): step 1/3. Its function is as follows. Catalyzes the conversion of L-arabinose to L-ribulose. This chain is L-arabinose isomerase, found in Aeromonas hydrophila subsp. hydrophila (strain ATCC 7966 / DSM 30187 / BCRC 13018 / CCUG 14551 / JCM 1027 / KCTC 2358 / NCIMB 9240 / NCTC 8049).